A 207-amino-acid polypeptide reads, in one-letter code: Outer-membrane lipoprotein LolB (207 aa).

The signal sequence occupies residues 1-21 (MTLPDFRLIRLLPLASLVLTA). Cysteine 22 is lipidated: N-palmitoyl cysteine. Cysteine 22 carries S-diacylglycerol cysteine lipidation.

It belongs to the LolB family. Monomer.

The protein resides in the cell outer membrane. Plays a critical role in the incorporation of lipoproteins in the outer membrane after they are released by the LolA protein. The polypeptide is Outer-membrane lipoprotein LolB (Salmonella schwarzengrund (strain CVM19633)).